A 968-amino-acid polypeptide reads, in one-letter code: RNA polymerase-associated protein RapA (968 aa).

Residues D164–N334 enclose the Helicase ATP-binding domain. D177–T184 provides a ligand contact to ATP. The DEAH box signature appears at D280–H283. Residues R490–G662 enclose the Helicase C-terminal domain.

Belongs to the SNF2/RAD54 helicase family. RapA subfamily. As to quaternary structure, interacts with the RNAP. Has a higher affinity for the core RNAP than for the holoenzyme. Its ATPase activity is stimulated by binding to RNAP.

In terms of biological role, transcription regulator that activates transcription by stimulating RNA polymerase (RNAP) recycling in case of stress conditions such as supercoiled DNA or high salt concentrations. Probably acts by releasing the RNAP, when it is trapped or immobilized on tightly supercoiled DNA. Does not activate transcription on linear DNA. Probably not involved in DNA repair. The polypeptide is RNA polymerase-associated protein RapA (Escherichia coli O139:H28 (strain E24377A / ETEC)).